The primary structure comprises 288 residues: Bifunctional protein FolD (288 aa).

Residues 168 to 170 (GRG), threonine 195, and valine 236 contribute to the NADP(+) site.

It belongs to the tetrahydrofolate dehydrogenase/cyclohydrolase family. In terms of assembly, homodimer.

The catalysed reaction is (6R)-5,10-methylene-5,6,7,8-tetrahydrofolate + NADP(+) = (6R)-5,10-methenyltetrahydrofolate + NADPH. The enzyme catalyses (6R)-5,10-methenyltetrahydrofolate + H2O = (6R)-10-formyltetrahydrofolate + H(+). It functions in the pathway one-carbon metabolism; tetrahydrofolate interconversion. In terms of biological role, catalyzes the oxidation of 5,10-methylenetetrahydrofolate to 5,10-methenyltetrahydrofolate and then the hydrolysis of 5,10-methenyltetrahydrofolate to 10-formyltetrahydrofolate. This Mycobacterium sp. (strain JLS) protein is Bifunctional protein FolD.